The chain runs to 382 residues: Apolipoprotein A-IV (382 aa).

The signal sequence occupies residues 1-20 (MFLKAVVLTLSLVAVTGAQA). 13 tandem repeats follow at residues 33–54 (DYFS…KSEL), 60–81 (ALFQ…KKLV), 82–103 (SFAM…EEIR), 115–136 (PHAD…QRLG), 137–158 (PYAE…NQLT), 159–180 (AHAQ…ASLT), 181–202 (PYAD…GHLT), 203–224 (PYAD…RSLA), 225–246 (PYAQ…FQMK), 247–268 (KNAE…QKLV), 269–286 (PVAE…EELQ), 287–308 (KSLA…RNMG), and 309–330 (PYGE…QKLG). The segment at 33–330 (DYFSQLSNNA…QVEELRQKLG (298 aa)) is 13 X 22 AA approximate tandem repeats.

The protein belongs to the apolipoprotein A1/A4/E family. Homodimer. Post-translationally, phosphorylation sites are present in the extracellular medium.

Its subcellular location is the secreted. Functionally, may have a role in chylomicrons and VLDL secretion and catabolism. Required for efficient activation of lipoprotein lipase by ApoC-II; potent activator of LCAT. Apoa-IV is a major component of HDL and chylomicrons. The sequence is that of Apolipoprotein A-IV (APOA4) from Mirounga angustirostris (Northern elephant seal).